Consider the following 121-residue polypeptide: Holin-like protein CidA 1 (121 aa).

4 helical membrane passes run 7–24 (SGQILLLFCFAWTGEWIA), 28–50 (HLPVPGSIIGIFLLLISLKFNLV), 62–81 (LLKELILFFIPSAVAVIRYR), and 91–113 (LILIIMISTLCVTLVTGLLTELL).

It belongs to the CidA/LrgA family. CidA subfamily.

It is found in the cell membrane. Increases the activity of extracellular murein hydrolases possibly by mediating their export via hole formation. Inhibited by the antiholin-like proteins LrgAB. In an unstressed cell, the LrgAB products probably inhibit the function of the CidA protein. When a cell is stressed by the addition of antibiotics or by other factors in the environment, CidA possibly oligomerizes within the bacterial cell membrane, creating lesions that disrupt the proton motive force, which in turn results in loss of cell viability. These lesions are also hypothesized to regulate the subsequent cell lysis by either allowing the murein hydrolases access to the cell wall substrate and/or regulating their activity by a possible change in the cell wall pH that results from loss of membrane potential. The chain is Holin-like protein CidA 1 (cidA1) from Bacillus cereus (strain ATCC 14579 / DSM 31 / CCUG 7414 / JCM 2152 / NBRC 15305 / NCIMB 9373 / NCTC 2599 / NRRL B-3711).